The primary structure comprises 406 residues: Mitochondrial ribosome-associated GTPase 2 (406 aa).

The tract at residues 15-406 is localized in the mitochondria; that stretch reads FQGVGHWALS…LGQGRQPLRW (392 aa). The tract at residues 30–406 is not localized in the mitochondria; it reads KPSRLLPQRA…LGQGRQPLRW (377 aa). Residues 70-224 form the Obg domain; that stretch reads RYFVDYRRVL…RVLHLELKTV (155 aa). The region spanning 225-390 is the OBG-type G domain; it reads AHAGMVGFPN…LLLHLKVLYD (166 aa). Residues 231 to 238, 256 to 260, 278 to 281, 345 to 348, and 371 to 373 contribute to the GTP site; these read GFPNAGKS, FTTLK, DIPG, NKID, and SAL. Positions 238 and 258 each coordinate Mg(2+).

This sequence belongs to the TRAFAC class OBG-HflX-like GTPase superfamily. OBG GTPase family. As to quaternary structure, associates with the mitochondrial ribosome large subunit; the association occurs in a GTP-dependent manner. The cofactor is Mg(2+).

Its subcellular location is the mitochondrion. It is found in the mitochondrion inner membrane. Plays a role in the regulation of the mitochondrial ribosome assembly and of translational activity. Displays GTPase activity. Involved in the ribosome maturation process. In Homo sapiens (Human), this protein is Mitochondrial ribosome-associated GTPase 2 (MTG2).